A 600-amino-acid polypeptide reads, in one-letter code: Elongation factor 4 (600 aa).

Residues 4 to 186 enclose the tr-type G domain; sequence SKIRNFSIIA…AIVNKIPAPY (183 aa). GTP contacts are provided by residues 16-21 and 133-136; these read DHGKST and NKVD.

It belongs to the TRAFAC class translation factor GTPase superfamily. Classic translation factor GTPase family. LepA subfamily.

Its subcellular location is the cell membrane. The catalysed reaction is GTP + H2O = GDP + phosphate + H(+). Its function is as follows. Required for accurate and efficient protein synthesis under certain stress conditions. May act as a fidelity factor of the translation reaction, by catalyzing a one-codon backward translocation of tRNAs on improperly translocated ribosomes. Back-translocation proceeds from a post-translocation (POST) complex to a pre-translocation (PRE) complex, thus giving elongation factor G a second chance to translocate the tRNAs correctly. Binds to ribosomes in a GTP-dependent manner. In Mesoplasma florum (strain ATCC 33453 / NBRC 100688 / NCTC 11704 / L1) (Acholeplasma florum), this protein is Elongation factor 4.